A 142-amino-acid chain; its full sequence is Neuritin (142 aa).

Positions 1-27 (MGLKLNGRYISLILAVQIAYLVQAVRA) are cleaved as a signal peptide. A lipid anchor (GPI-anchor amidated glycine) is attached at Gly-116. The propeptide at 117-142 (AAGPLLPALPVLLVSLSAALATWLSF) is removed in mature form.

It belongs to the neuritin family. As to quaternary structure, component of the outer core of AMPAR complex. AMPAR complex consists of an inner core made of 4 pore-forming GluA/GRIA proteins (GRIA1, GRIA2, GRIA3 and GRIA4) and 4 major auxiliary subunits arranged in a twofold symmetry. One of the two pairs of distinct binding sites is occupied either by CNIH2, CNIH3 or CACNG2, CACNG3. The other harbors CACNG2, CACNG3, CACNG4, CACNG8 or GSG1L. This inner core of AMPAR complex is complemented by outer core constituents binding directly to the GluA/GRIA proteins at sites distinct from the interaction sites of the inner core constituents. Outer core constituents include at least PRRT1, PRRT2, CKAMP44/SHISA9, FRRS1L and NRN1. The proteins of the inner and outer core serve as a platform for other, more peripherally associated AMPAR constituents. Alone or in combination, these auxiliary subunits control the gating and pharmacology of the AMPAR complex and profoundly impact their biogenesis and protein processing.

The protein localises to the cell membrane. The protein resides in the synapse. In terms of biological role, promotes neurite outgrowth and especially branching of neuritic processes in primary hippocampal and cortical cells. This chain is Neuritin (NRN1), found in Bos taurus (Bovine).